The primary structure comprises 1250 residues: DNA-directed RNA polymerase subunit beta'' (1250 aa).

Cys-224, Cys-314, Cys-321, and Cys-324 together coordinate Zn(2+).

Belongs to the RNA polymerase beta' chain family. RpoC2 subfamily. As to quaternary structure, in plastids the minimal PEP RNA polymerase catalytic core is composed of four subunits: alpha, beta, beta', and beta''. When a (nuclear-encoded) sigma factor is associated with the core the holoenzyme is formed, which can initiate transcription. The cofactor is Zn(2+).

It localises to the plastid. It is found in the chloroplast. The catalysed reaction is RNA(n) + a ribonucleoside 5'-triphosphate = RNA(n+1) + diphosphate. In terms of biological role, DNA-dependent RNA polymerase catalyzes the transcription of DNA into RNA using the four ribonucleoside triphosphates as substrates. The polypeptide is DNA-directed RNA polymerase subunit beta'' (Staurastrum punctulatum (Green alga)).